The chain runs to 119 residues: Large ribosomal subunit protein uL18 (119 aa).

This sequence belongs to the universal ribosomal protein uL18 family. As to quaternary structure, part of the 50S ribosomal subunit; part of the 5S rRNA/L5/L18/L25 subcomplex. Contacts the 5S and 23S rRNAs.

Functionally, this is one of the proteins that bind and probably mediate the attachment of the 5S RNA into the large ribosomal subunit, where it forms part of the central protuberance. This Clostridium perfringens (strain 13 / Type A) protein is Large ribosomal subunit protein uL18.